Consider the following 212-residue polypeptide: 3-isopropylmalate dehydratase small subunit (212 aa).

The protein belongs to the LeuD family. LeuD type 1 subfamily. In terms of assembly, heterodimer of LeuC and LeuD.

The catalysed reaction is (2R,3S)-3-isopropylmalate = (2S)-2-isopropylmalate. It participates in amino-acid biosynthesis; L-leucine biosynthesis; L-leucine from 3-methyl-2-oxobutanoate: step 2/4. Its function is as follows. Catalyzes the isomerization between 2-isopropylmalate and 3-isopropylmalate, via the formation of 2-isopropylmaleate. The protein is 3-isopropylmalate dehydratase small subunit of Laribacter hongkongensis (strain HLHK9).